The primary structure comprises 476 residues: NADP-dependent glyceraldehyde-3-phosphate dehydrogenase (476 aa).

Arginine 103 contributes to the substrate binding site. Position 151 (serine 151) interacts with NADP(+). 154-155 (NY) serves as a coordination point for substrate. Residues lysine 177, threonine 180, aspartate 215, and 230–251 (GSTP…MLEL) each bind NADP(+). Active-site residues include glutamate 250 and cysteine 284. 283–285 (RCT) is a substrate binding site. Glutamate 377 lines the NADP(+) pocket. Arginine 437 lines the substrate pocket.

It belongs to the aldehyde dehydrogenase family. In terms of assembly, homotetramer.

The enzyme catalyses D-glyceraldehyde 3-phosphate + NADP(+) + H2O = (2R)-3-phosphoglycerate + NADPH + 2 H(+). Functionally, catalyzes the irreversible NADP-dependent oxidation of glyceraldehyde-3-phosphate to 3-phosphoglycerate. Is not able to use NAD instead of NADP. May play an important role in NADPH production in S.equinus. This is NADP-dependent glyceraldehyde-3-phosphate dehydrogenase (gapN) from Streptococcus equinus (Streptococcus bovis).